Here is an 86-residue protein sequence, read N- to C-terminus: MVVIRMARGGAKKRPFYHIVVADSRSRRDGRFIERLGFYNPIGAVAELRIDKERAAYWLSQGAQPSDTVAGFLKKEGVSKTGVASV.

The protein belongs to the bacterial ribosomal protein bS16 family.

The chain is Small ribosomal subunit protein bS16 from Acidithiobacillus ferrooxidans (strain ATCC 23270 / DSM 14882 / CIP 104768 / NCIMB 8455) (Ferrobacillus ferrooxidans (strain ATCC 23270)).